The following is a 180-amino-acid chain: ATP-dependent protease subunit HslV (180 aa).

Thr-5 is a catalytic residue. Residues Gly-165, Cys-168, and Thr-171 each contribute to the Na(+) site.

Belongs to the peptidase T1B family. HslV subfamily. In terms of assembly, a double ring-shaped homohexamer of HslV is capped on each side by a ring-shaped HslU homohexamer. The assembly of the HslU/HslV complex is dependent on binding of ATP.

It localises to the cytoplasm. It carries out the reaction ATP-dependent cleavage of peptide bonds with broad specificity.. Allosterically activated by HslU binding. Functionally, protease subunit of a proteasome-like degradation complex believed to be a general protein degrading machinery. The protein is ATP-dependent protease subunit HslV of Helicobacter pylori (strain HPAG1).